A 530-amino-acid polypeptide reads, in one-letter code: T-box transcription factor TBX21 (530 aa).

The disordered stretch occupies residues 1–55; the sequence is MGIVEPGCGDMLTGTEPMPSDEGRGPGADQQHRFFYPEPGAQDPTDRRAGSSLGT. Phosphoserine is present on Ser52. Thr55 carries the phosphothreonine modification. Residues Tyr76 and Tyr117 each carry the phosphotyrosine modification. The segment at residues 140–325 is a DNA-binding region (T-box); that stretch reads LSNHLLWSKF…NNPFAKGFRE (186 aa). Tyr219 carries the phosphotyrosine; by ABL1 modification. The residue at position 224 (Ser224) is a Phosphoserine. A Phosphotyrosine; by ABL1 modification is found at Tyr265. Position 302 is a phosphothreonine (Thr302). A Phosphotyrosine; by ABL1 modification is found at Tyr304. Lys313 is covalently cross-linked (Glycyl lysine isopeptide (Lys-Gly) (interchain with G-Cter in ubiquitin)). The interval 444 to 530 is disordered; sequence AGWFRPMRTL…EGQFYNYFPN (87 aa). A compositionally biased stretch (polar residues) spans 462–482; it reads SEEQGSSPSLWPEVTSLQPEP. The span at 498–515 shows a compositional bias: low complexity; the sequence is SPYPSSGDSSSPAGAPSP. Residue Ser508 is modified to Phosphoserine. A Phosphotyrosine; by ITK modification is found at Tyr525.

Interacts with RUNX1 and RUNX3. Interacts with ITK. The phosphorylated form (at Tyr-525) interacts with GATA3. Interacts with ABL1. Interacts with RELA. The phosphorylated form (at Thr-302) interacts with NFATC2. Interacts with KDM6B. Interacts with SMARCA4 in a KDM6B-dependent manner. Interacts with CCTN1 and CDK9. Interacts with USP10. Post-translationally, phosphorylations at Ser-52, Tyr-76, Ser-224 and Ser-508 are regulated by mTORC1. Phosphorylation at Tyr-525 is essential for its interaction GATA3. Phosphorylation at Tyr-219, Tyr-265 and Tyr-304 enhances its transcriptional activator activity. Phosphorylation at Thr-302 is required for its interaction with NFATC2. In terms of processing, ubiquitinated at Lys-313, leading to its degradation by the proteasome. Ubiquitination is essential for controlling protein stability, binding to the T-box-binding element of the IFN-gamma promoter, and for interaction with NFATC2 through induction of phosphorylation at Thr-302. Deubiquitinated by USP10 leading to its stabilization. T-cell specific. Expressed in regulatory T (TReg) cells.

Its subcellular location is the nucleus. Functionally, lineage-defining transcription factor which initiates Th1 lineage development from naive Th precursor cells both by activating Th1 genetic programs and by repressing the opposing Th2 and Th17 genetic programs. Activates transcription of a set of genes important for Th1 cell function, including those encoding IFN-gamma and the chemokine receptor CXCR3. Activates IFNG and CXCR3 genes in part by recruiting chromatin remodeling complexes including KDM6B, a SMARCA4-containing SWI/SNF-complex, and an H3K4me2-methyltransferase complex to their promoters and all of these complexes serve to establish a more permissive chromatin state conducive with transcriptional activation. Can activate Th1 genes also via recruitment of Mediator complex and P-TEFb (composed of CDK9 and CCNT1/cyclin-T1) in the form of the super elongation complex (SEC) to super-enhancers and associated genes in activated Th1 cells. Inhibits the Th17 cell lineage commitment by blocking RUNX1-mediated transactivation of Th17 cell-specific transcriptinal regulator RORC. Inhibits the Th2 cell lineage commitment by suppressing the production of Th2 cytokines, such as IL-4, IL-5, and IL- 13, via repression of transcriptional regulators GATA3 and NFATC2. Protects Th1 cells from amplifying aberrant type-I IFN response in an IFN-gamma abundant microenvironment by acting as a repressor of type-I IFN transcription factors and type-I IFN- stimulated genes. Acts as a regulator of antiviral B-cell responses; controls chronic viral infection by promoting the antiviral antibody IgG2a isotype switching and via regulation of a broad antiviral gene expression program. This chain is T-box transcription factor TBX21 (Tbx21), found in Mus musculus (Mouse).